The primary structure comprises 97 residues: Small ribosomal subunit protein bS18c (97 aa).

The protein belongs to the bacterial ribosomal protein bS18 family. Part of the 30S ribosomal subunit.

It localises to the plastid. The protein localises to the chloroplast. This Oenothera glazioviana (Large-flowered evening primrose) protein is Small ribosomal subunit protein bS18c.